A 431-amino-acid chain; its full sequence is Adenosylhomocysteinase (431 aa).

Residues Thr56, Asp131, and Glu156 each coordinate substrate. Residue 157–159 (TTT) participates in NAD(+) binding. 2 residues coordinate substrate: Lys186 and Asp190. NAD(+) contacts are provided by residues Asn191, 222–227 (GDVGKG), Glu243, 299–301 (IGH), and Asn345.

It belongs to the adenosylhomocysteinase family. In terms of assembly, homotetramer. The cofactor is NAD(+).

The catalysed reaction is S-adenosyl-L-homocysteine + H2O = L-homocysteine + adenosine. It functions in the pathway amino-acid biosynthesis; L-homocysteine biosynthesis; L-homocysteine from S-adenosyl-L-homocysteine: step 1/1. In terms of biological role, adenosylhomocysteine is a competitive inhibitor of S-adenosyl-L-methionine-dependent methyl transferase reactions; therefore adenosylhomocysteinase may play a key role in the control of methylations via regulation of the intracellular concentration of adenosylhomocysteine. The chain is Adenosylhomocysteinase (sahA) from Dictyostelium discoideum (Social amoeba).